A 377-amino-acid polypeptide reads, in one-letter code: Flagellin (377 aa).

This sequence belongs to the bacterial flagellin family.

The protein resides in the secreted. The protein localises to the bacterial flagellum. Functionally, flagellin is the subunit protein which polymerizes to form the filaments of bacterial flagella. The polypeptide is Flagellin (fla) (Clostridium tyrobutyricum).